The chain runs to 597 residues: MPDIKITPLGAGQDVGRSCLLLSMGGKNIMLDCGMHMGYNDERRFPDFSYIVPEGPITSHIDCVIISHFHLDHCGALPYMSEIVGYTGPIYMTHPTKAIAPILLEDMRKVAVERKGESNFFTTQMIKDCMKKVIPVTLHQSMMVDTDLEIKAYYAGHVLGAAMFWIKVGSQSVVYTGDYNMTPDRHLGAAWIDKCRPDLLISESTYATTIRDSKRCRERDFLKKVHECVAKGGKVLIPVFALGRAQELCILLETYWERMNLKYPIYFALGLTEKANTYYKMFITWTNQKIRKTFVHRNMFDFKHIKPFDKAYIDNPGAMVVFATPGMLHAGLSLQIFKKWAPNENNMVIMPGYCVQGTVGNKILGGAKKVEFENRQVVEVKMAVEYMSFSAHADAKGIMQLIQNCEPKNVMLVHGEAGKMKFLRSKIKDEFNLETYMPANGETCVISTPVKIPVDASVSLLKAEARSYNAQPPDPKRRRLIHGVLVMKDNRIMLQNLTDALKEIGINRHVMRFTSKVKMDDSGPVIRTSERLKTLLEEKLAGWTVTMQENGSIAIESVEVKVEEDEKDPKQKNILISWTNQDEDIGAYILNVLQNMC.

Residues histidine 68, histidine 70, aspartate 72, histidine 73, histidine 157, and aspartate 178 each contribute to the Zn(2+) site. Residues 68–73 (HFHLDH) carry the HXHXDH motif motif. Glutamate 203 is an active-site residue. Position 414 (histidine 414) interacts with Zn(2+). Lysine 462 lines the 1D-myo-inositol hexakisphosphate pocket.

This sequence belongs to the metallo-beta-lactamase superfamily. RNA-metabolizing metallo-beta-lactamase-like family. INTS11 subfamily. Belongs to the multiprotein complex Integrator, at least composed of IntS1, IntS2, IntS3, IntS4, omd/IntS5, IntS6, defl/IntS7, IntS8, IntS9, IntS10, IntS11, IntS12, asun/IntS13, IntS14 and IntS15. The core complex associates with protein phosphatase 2A subunits mts/PP2A and Pp2A-29B, to form the Integrator-PP2A (INTAC) complex. IntS11 is part of the RNA endonuclease subcomplex, composed of IntS4, IntS9, IntS11 and inositol hexakisphosphate (InsP6). Interacts with Brat1; interaction is required for the assembly of the RNA endonuclease subcomplex and inhibits the endonuclease activity of IntS11 before formation of mature integrator complex. Requires Zn(2+) as cofactor. Expressed in neurons and glia of the larval and adult brain.

It localises to the nucleus. It is found in the cytoplasm. Its subcellular location is the cytosol. With respect to regulation, the RNA endonuclease activity is inhibited by Brat1 that forms hyrogen bond and hydrophobic interactions with the active site. Its function is as follows. RNA endonuclease component of the integrator complex, a multiprotein complex that terminates RNA polymerase II (Pol II) transcription in the promoter-proximal region of genes. The integrator complex provides a quality checkpoint during transcription elongation by driving premature transcription termination of transcripts that are unfavorably configured for transcriptional elongation: the complex terminates transcription by (1) catalyzing dephosphorylation of the C-terminal domain (CTD) of Pol II subunit Polr2A/Rbp1 and Spt5, and (2) degrading the exiting nascent RNA transcript via endonuclease activity. The integrator complex is also involved in the 3'-end processing of the U7 snRNA, and also the spliceosomal snRNAs U1, U2, U4 and U5. Within the integrator complex, IntS11 constitutes the RNA endonuclease subunit that degrades exiting nascent RNA transcripts. In Drosophila melanogaster (Fruit fly), this protein is Integrator complex subunit 11.